Here is a 368-residue protein sequence, read N- to C-terminus: Homoserine dehydrogenase (368 aa).

NAD(+) contacts are provided by V12, G14, and V15. Residue V15 coordinates NADP(+). NADPH-binding residues include V15, K59, T95, S96, and K119. T95 is a binding site for NAD(+). NADP(+) is bound at residue T95. K119 contacts NADP(+). Na(+) contacts are provided by E146, V149, A151, and L153. Positions 209 and 212 each coordinate NADP(+). L-homoserine is bound by residues E212 and D223. K227 (proton donor) is an active-site residue. G349 serves as a coordination point for NAD(+). G349 is a binding site for NADP(+). G349 serves as a coordination point for NADPH.

The protein belongs to the homoserine dehydrogenase family. Requires a metal cation as cofactor.

It carries out the reaction L-homoserine + NADP(+) = L-aspartate 4-semialdehyde + NADPH + H(+). The catalysed reaction is L-homoserine + NAD(+) = L-aspartate 4-semialdehyde + NADH + H(+). It functions in the pathway amino-acid biosynthesis; L-methionine biosynthesis via de novo pathway; L-homoserine from L-aspartate: step 3/3. It participates in amino-acid biosynthesis; L-threonine biosynthesis; L-threonine from L-aspartate: step 3/5. In terms of biological role, catalyzes the conversion of L-aspartate-beta-semialdehyde (L-Asa) to L-homoserine (L-Hse), the third step in the biosynthesis of amino acids that derive from aspartate (the aspartate family of amino acids), including methioinine and threonine, the latter of which is a precursor to isoleucine; production of homoserine leads to a branch-point in the pathway as it can either be O-phosphorylated for processing to threonine, or O-acylated for processing to methionine. The protein is Homoserine dehydrogenase of Emericella nidulans (strain FGSC A4 / ATCC 38163 / CBS 112.46 / NRRL 194 / M139) (Aspergillus nidulans).